A 339-amino-acid polypeptide reads, in one-letter code: MTVQWQEQVSLKPYNTFGIDVKARYFSQVQDDQQVRQALGQAQQRGLPVLVIGGGSNLLLTRDIDALVLHMASRGRRVLSDDGERIVVEAEAGEPWHAFVQWTLAQGYCGLENLSLIPGTVGAAPMQNVGAYGVEIKDVFAGLTALDRETGELRDFSLAECAFGYRDSLFKRNPGRWLILRVRFALTRTLHAHLDYGPVRQRLSERGVTELTAQAISDAICSIRREKLPDPAELGNAGSFFKNPVVTADLVERIRAQYPGVVAYPQADGQVKLAAGWLIEQAGWKGHREGDAGVHRLQSLVLVNYGQASGAQMHALARKIQADIFERFGVELEMEPNLY.

Residues 18 to 189 (GIDVKARYFS…LRVRFALTRT (172 aa)) enclose the FAD-binding PCMH-type domain. Arg-166 is a catalytic residue. Ser-239 functions as the Proton donor in the catalytic mechanism. Glu-335 is an active-site residue.

Belongs to the MurB family. FAD is required as a cofactor.

The protein localises to the cytoplasm. It carries out the reaction UDP-N-acetyl-alpha-D-muramate + NADP(+) = UDP-N-acetyl-3-O-(1-carboxyvinyl)-alpha-D-glucosamine + NADPH + H(+). It functions in the pathway cell wall biogenesis; peptidoglycan biosynthesis. Cell wall formation. This Pseudomonas putida (strain ATCC 47054 / DSM 6125 / CFBP 8728 / NCIMB 11950 / KT2440) protein is UDP-N-acetylenolpyruvoylglucosamine reductase.